The primary structure comprises 461 residues: Smoothelin-like protein 2 (461 aa).

A coiled-coil region spans residues 55 to 88; the sequence is PLARTVADLQRDNQRLQAQLERLTRQVEALGLAS. Disordered regions lie at residues 87–193 and 227–248; these read ASGM…LRLP and LNPS…KNSS. Positions 94–107 are enriched in pro residues; that stretch reads PGTPGTPSPPPAPG. Residue threonine 96 is modified to Phosphothreonine. Phosphoserine occurs at positions 101, 129, and 134. A compositionally biased stretch (basic and acidic residues) spans 134 to 147; the sequence is SLDHDEASESEMRK. Phosphoserine occurs at positions 256 and 269. The interval 260-307 is disordered; the sequence is AVTASKHSNSPPLVTPPQSPVSPQPPAITQVHRQGERRRELVRSQTLP. Residues 272 to 285 show a composition bias toward pro residues; that stretch reads LVTPPQSPVSPQPP. At threonine 274 the chain carries Phosphothreonine. Residue serine 278 is modified to Phosphoserine. The span at 292 to 301 shows a compositional bias: basic and acidic residues; it reads RQGERRRELV. Serine 344 bears the Phosphoserine mark. Residues 351–458 form the Calponin-homology (CH) domain; sequence SSIKQILLEW…YVQSLYNHLR (108 aa).

It belongs to the smoothelin family.

This Homo sapiens (Human) protein is Smoothelin-like protein 2 (SMTNL2).